The sequence spans 177 residues: Adenine phosphoribosyltransferase (177 aa).

It belongs to the purine/pyrimidine phosphoribosyltransferase family. In terms of assembly, homodimer.

It is found in the cytoplasm. It carries out the reaction AMP + diphosphate = 5-phospho-alpha-D-ribose 1-diphosphate + adenine. It functions in the pathway purine metabolism; AMP biosynthesis via salvage pathway; AMP from adenine: step 1/1. Functionally, catalyzes a salvage reaction resulting in the formation of AMP, that is energically less costly than de novo synthesis. The chain is Adenine phosphoribosyltransferase from Cutibacterium acnes (strain DSM 16379 / KPA171202) (Propionibacterium acnes).